The primary structure comprises 304 residues: 33 kDa chaperonin (304 aa).

2 disulfide bridges follow: cysteine 236–cysteine 238 and cysteine 269–cysteine 272.

This sequence belongs to the HSP33 family. Post-translationally, under oxidizing conditions two disulfide bonds are formed involving the reactive cysteines. Under reducing conditions zinc is bound to the reactive cysteines and the protein is inactive.

It is found in the cytoplasm. Its function is as follows. Redox regulated molecular chaperone. Protects both thermally unfolding and oxidatively damaged proteins from irreversible aggregation. Plays an important role in the bacterial defense system toward oxidative stress. The chain is 33 kDa chaperonin from Pelobacter propionicus (strain DSM 2379 / NBRC 103807 / OttBd1).